The following is a 274-amino-acid chain: uncharacterized protein (274 aa).

This sequence belongs to the PhoU family.

This is an uncharacterized protein from Deinococcus radiodurans (strain ATCC 13939 / DSM 20539 / JCM 16871 / CCUG 27074 / LMG 4051 / NBRC 15346 / NCIMB 9279 / VKM B-1422 / R1).